Reading from the N-terminus, the 200-residue chain is Histone H1 (200 aa).

Over residues 1 to 14 (MPPKKAPTTAKKAA) the composition is skewed to low complexity. Disordered stretches follow at residues 1–20 (MPPKKAPTTAKKAASGPTHT) and 78–200 (DFIQ…NKKA). The H15 domain occupies 18 to 93 (THTSYRDMIK…GTSGPVKLAK (76 aa)). Low complexity predominate over residues 94 to 116 (KQAPAKPAPKKPATTTKTAAPKK). Basic and acidic residues predominate over residues 120-131 (KKADKAEKAEKP). Positions 159-185 (TAAPAVVDKPKVVSVTKSGRKTTTTAK) are enriched in low complexity.

This sequence belongs to the histone H1/H5 family.

It localises to the nucleus. The protein localises to the chromosome. Functionally, could act as an H1-type linker histone. This is Histone H1 (hhoA) from Emericella nidulans (strain FGSC A4 / ATCC 38163 / CBS 112.46 / NRRL 194 / M139) (Aspergillus nidulans).